The following is a 130-amino-acid chain: MARVTVEDCIDKVDNRFDLVLLAAHRARMISSGSPITVDRDNDKNPVVSLREIADQTIAPEDLKEELVHSLQKFVEVDEPEPDTIPLIGSAGASVDADDTEVAVERMTEEELLKGLEGLAPPEEQPEEEE.

The disordered stretch occupies residues 110–130 (EELLKGLEGLAPPEEQPEEEE).

This sequence belongs to the RNA polymerase subunit omega family. The RNAP catalytic core consists of 2 alpha, 1 beta, 1 beta' and 1 omega subunit. When a sigma factor is associated with the core the holoenzyme is formed, which can initiate transcription.

It catalyses the reaction RNA(n) + a ribonucleoside 5'-triphosphate = RNA(n+1) + diphosphate. In terms of biological role, promotes RNA polymerase assembly. Latches the N- and C-terminal regions of the beta' subunit thereby facilitating its interaction with the beta and alpha subunits. The protein is DNA-directed RNA polymerase subunit omega of Afipia carboxidovorans (strain ATCC 49405 / DSM 1227 / KCTC 32145 / OM5) (Oligotropha carboxidovorans).